The primary structure comprises 378 residues: Queuine tRNA-ribosyltransferase (378 aa).

D92 (proton acceptor) is an active-site residue. Residues 92–96 (DSGGF), D146, Q188, and G215 contribute to the substrate site. Residues 246–252 (GVGTHLE) form an RNA binding region. D265 functions as the Nucleophile in the catalytic mechanism. Residues 270-274 (TRLAR) are RNA binding; important for wobble base 34 recognition. C303, C305, C308, and H334 together coordinate Zn(2+).

Belongs to the queuine tRNA-ribosyltransferase family. In terms of assembly, homodimer. Within each dimer, one monomer is responsible for RNA recognition and catalysis, while the other monomer binds to the replacement base PreQ1. The cofactor is Zn(2+).

It carries out the reaction 7-aminomethyl-7-carbaguanine + guanosine(34) in tRNA = 7-aminomethyl-7-carbaguanosine(34) in tRNA + guanine. Its pathway is tRNA modification; tRNA-queuosine biosynthesis. In terms of biological role, catalyzes the base-exchange of a guanine (G) residue with the queuine precursor 7-aminomethyl-7-deazaguanine (PreQ1) at position 34 (anticodon wobble position) in tRNAs with GU(N) anticodons (tRNA-Asp, -Asn, -His and -Tyr). Catalysis occurs through a double-displacement mechanism. The nucleophile active site attacks the C1' of nucleotide 34 to detach the guanine base from the RNA, forming a covalent enzyme-RNA intermediate. The proton acceptor active site deprotonates the incoming PreQ1, allowing a nucleophilic attack on the C1' of the ribose to form the product. After dissociation, two additional enzymatic reactions on the tRNA convert PreQ1 to queuine (Q), resulting in the hypermodified nucleoside queuosine (7-(((4,5-cis-dihydroxy-2-cyclopenten-1-yl)amino)methyl)-7-deazaguanosine). This Thermosynechococcus vestitus (strain NIES-2133 / IAM M-273 / BP-1) protein is Queuine tRNA-ribosyltransferase.